The chain runs to 275 residues: Ribosomal RNA small subunit methyltransferase A (275 aa).

S-adenosyl-L-methionine contacts are provided by Asn-21, Leu-23, Gly-48, Glu-69, Asp-94, and Asn-115.

This sequence belongs to the class I-like SAM-binding methyltransferase superfamily. rRNA adenine N(6)-methyltransferase family. RsmA subfamily.

The protein resides in the cytoplasm. It catalyses the reaction adenosine(1518)/adenosine(1519) in 16S rRNA + 4 S-adenosyl-L-methionine = N(6)-dimethyladenosine(1518)/N(6)-dimethyladenosine(1519) in 16S rRNA + 4 S-adenosyl-L-homocysteine + 4 H(+). Functionally, specifically dimethylates two adjacent adenosines (A1518 and A1519) in the loop of a conserved hairpin near the 3'-end of 16S rRNA in the 30S particle. May play a critical role in biogenesis of 30S subunits. This is Ribosomal RNA small subunit methyltransferase A from Clostridium botulinum (strain Loch Maree / Type A3).